The sequence spans 102 residues: Large ribosomal subunit protein mL63 (102 aa).

It belongs to the mitochondrion-specific ribosomal protein mL63 family.

It localises to the mitochondrion. The protein is Large ribosomal subunit protein mL63 (Mrpl57) of Mus musculus (Mouse).